Here is a 520-residue protein sequence, read N- to C-terminus: Serine/threonine-protein kinases drp72 (520 aa).

In terms of domain architecture, Protein kinase spans 20–281 (YTLQWIVGHG…NELARAVSAV (262 aa)). ATP is bound by residues 26 to 34 (VGHGGMSTV) and K49. Residue D148 is the Proton acceptor of the active site. Disordered stretches follow at residues 315 to 334 (ARPT…RQEK) and 366 to 504 (SGDS…DAAD). Residues 374 to 394 (TPETITQTVTPTETTTSEEPT) are compositionally biased toward low complexity. Residues 395–411 (LAPPPVQPTRQPVPTPD) show a composition bias toward pro residues. The segment covering 416–429 (RLPTTTQESPTRVS) has biased composition (polar residues). Residues 440-449 (EQTTPGGQPP) show a composition bias toward low complexity. A compositionally biased stretch (polar residues) spans 450–460 (LSTLPTSLGWQ). The span at 469–484 (QGNPNTTGNPANPGTP) shows a compositional bias: low complexity. Residues 485 to 496 (GTTGGNGTGNAG) are compositionally biased toward gly residues.

Belongs to the protein kinase superfamily. Ser/Thr protein kinase family.

The catalysed reaction is L-seryl-[protein] + ATP = O-phospho-L-seryl-[protein] + ADP + H(+). It carries out the reaction L-threonyl-[protein] + ATP = O-phospho-L-threonyl-[protein] + ADP + H(+). In Corynebacterium efficiens (strain DSM 44549 / YS-314 / AJ 12310 / JCM 11189 / NBRC 100395), this protein is Serine/threonine-protein kinases drp72.